A 171-amino-acid chain; its full sequence is Large ribosomal subunit protein uL10 (171 aa).

This sequence belongs to the universal ribosomal protein uL10 family. In terms of assembly, part of the ribosomal stalk of the 50S ribosomal subunit. The N-terminus interacts with L11 and the large rRNA to form the base of the stalk. The C-terminus forms an elongated spine to which L12 dimers bind in a sequential fashion forming a multimeric L10(L12)X complex.

In terms of biological role, forms part of the ribosomal stalk, playing a central role in the interaction of the ribosome with GTP-bound translation factors. This Zymomonas mobilis subsp. mobilis (strain ATCC 31821 / ZM4 / CP4) protein is Large ribosomal subunit protein uL10.